Here is a 113-residue protein sequence, read N- to C-terminus: UPF0212 protein MmarC6_1165 (113 aa).

The protein belongs to the UPF0212 family.

The protein is UPF0212 protein MmarC6_1165 of Methanococcus maripaludis (strain C6 / ATCC BAA-1332).